A 466-amino-acid chain; its full sequence is MICVVIMRHQAWQSDGLPLSSSSNEACKLYDAILSQYVTWRNDETLGGIEGCITSIKAADPDFVMGHVISTGLELVGTGSSVLRDERLASAVRRTVELADTQQLTSREKNHVKAVQLFSKGALHKACEVWECILADHPTDLLALKFAHDGFFYLGEQTQMRDSVARVMPHWKPHMPLYRQIKGMYSFGLLETRLYDEAEKMAKEALSLTPEDGWSVHAVAHVHEMKAEVEKGLNFMASTEKNWTVCDMLACHNYWHWALYHIEKGNYEAALKIFDEQVSQRCVKSGAMLDIVDSCSLLYRLELEGVSVGERYRELLQVTQPHSEDHTLLFNDLHFLMVSLGSKDTGTTQRLLESLQELAKDPAENRQLQIAERVGLPMCQALLEFEQRNYRQAVELLKPIKQSFVEIGGSDAQRDVFSQLLIHAAMKSGDKEHQQLARCMLMERDAVRPNSPLTDRLIQRAHSLHA.

TPR repeat units lie at residues 175 to 212, 251 to 284, and 368 to 400; these read MPLY…TPED, CHNY…RCVK, and LQIA…LKPI.

This sequence belongs to the TTC38 family.

This is Tetratricopeptide repeat protein 38 (ttc38) from Danio rerio (Zebrafish).